A 956-amino-acid polypeptide reads, in one-letter code: Glutamyl aminopeptidase (956 aa).

Residues 1 to 21 (MILEERSSWEGSKRYCIKTKH) lie on the Cytoplasmic side of the membrane. Residues 22–42 (VAIICAVVVAVGLIVGLSVGL) form a helical; Signal-anchor for type II membrane protein membrane-spanning segment. Residues 43–956 (TRSCDSTEGM…IRNWFLDLNG (914 aa)) lie on the Extracellular side of the membrane. Residues 48 to 87 (STEGMTQGTTQGTTQAPSHLPPVTSPPEDQGVCPASEDES) form a disordered region. Residues 49–62 (TEGMTQGTTQGTTQ) are compositionally biased toward low complexity. Residues N126 and N199 are each glycosylated (N-linked (GlcNAc...) asparagine). E225 provides a ligand contact to substrate. N-linked (GlcNAc...) asparagine glycosylation is present at N326. 359–363 (GAMEN) provides a ligand contact to substrate. Residue H395 participates in Zn(2+) binding. The Proton acceptor role is filled by E396. The Zn(2+) site is built by H399 and E418. 10 N-linked (GlcNAc...) asparagine glycosylation sites follow: N556, N569, N599, N643, N647, N679, N764, N797, N802, and N829. R888 contacts substrate.

It belongs to the peptidase M1 family. As to quaternary structure, homodimer; disulfide-linked. The cofactor is Zn(2+).

The protein localises to the cell membrane. The enzyme catalyses Release of N-terminal glutamate (and to a lesser extent aspartate) from a peptide.. With respect to regulation, substrate specificity is modulated by calcium which enhances the enzymatic activity for cleavage of acidic residues while reducing its activity with basic residues. Inhibited by aminopeptidase inhibitors amastatin and bestatin. In terms of biological role, regulates central hypertension through its calcium-modulated preference to cleave N-terminal acidic residues from peptides such as angiotensin II. The chain is Glutamyl aminopeptidase (ENPEP) from Bos taurus (Bovine).